A 262-amino-acid polypeptide reads, in one-letter code: Putative hydro-lyase BLi00500/BL02808 (262 aa).

It belongs to the D-glutamate cyclase family.

This is Putative hydro-lyase BLi00500/BL02808 from Bacillus licheniformis (strain ATCC 14580 / DSM 13 / JCM 2505 / CCUG 7422 / NBRC 12200 / NCIMB 9375 / NCTC 10341 / NRRL NRS-1264 / Gibson 46).